Reading from the N-terminus, the 130-residue chain is Small ribosomal subunit protein uS8 (130 aa).

This sequence belongs to the universal ribosomal protein uS8 family. In terms of assembly, part of the 30S ribosomal subunit. Contacts proteins S5 and S12.

Its function is as follows. One of the primary rRNA binding proteins, it binds directly to 16S rRNA central domain where it helps coordinate assembly of the platform of the 30S subunit. This Coxiella burnetii (strain Dugway 5J108-111) protein is Small ribosomal subunit protein uS8.